The following is a 240-amino-acid chain: MKMMDANEIISFIQKSEKKTPVKVYIKGDLKEVTFPGTVQAFVNKKAGVLFGEWSEIKVILEENKKHIADYVVENDRRNSAIPMLDLKGIKARIEPGAIIRDHVEIGDNAVIMMNATINIGAVIGEGSMIDMNAVLGGRATVGKNCHVGAGAVLAGVIEPPSAKPVIVEDDVVIGANVVVLEGVTVGKGAVVAAGAIVTEDVPPYTVVAGTPARVIKKIDEKTKAKTEIKQELRQLNPEK.

This sequence belongs to the transferase hexapeptide repeat family. DapH subfamily.

The catalysed reaction is (S)-2,3,4,5-tetrahydrodipicolinate + acetyl-CoA + H2O = L-2-acetamido-6-oxoheptanedioate + CoA. The protein operates within amino-acid biosynthesis; L-lysine biosynthesis via DAP pathway; LL-2,6-diaminopimelate from (S)-tetrahydrodipicolinate (acetylase route): step 1/3. In terms of biological role, catalyzes the transfer of an acetyl group from acetyl-CoA to tetrahydrodipicolinate. The chain is 2,3,4,5-tetrahydropyridine-2,6-dicarboxylate N-acetyltransferase from Bacillus cytotoxicus (strain DSM 22905 / CIP 110041 / 391-98 / NVH 391-98).